A 278-amino-acid chain; its full sequence is Formamidopyrimidine-DNA glycosylase (278 aa).

Pro-2 (schiff-base intermediate with DNA) is an active-site residue. Glu-3 acts as the Proton donor in catalysis. Lys-58 acts as the Proton donor; for beta-elimination activity in catalysis. The DNA site is built by His-92 and Arg-111. The FPG-type zinc-finger motif lies at 239-273; sequence HVYGKKGVPCERCGTPIEKIKVAQRGTHFCPKCQI. The active-site Proton donor; for delta-elimination activity is the Arg-263.

This sequence belongs to the FPG family. Monomer. Requires Zn(2+) as cofactor.

It carries out the reaction Hydrolysis of DNA containing ring-opened 7-methylguanine residues, releasing 2,6-diamino-4-hydroxy-5-(N-methyl)formamidopyrimidine.. It catalyses the reaction 2'-deoxyribonucleotide-(2'-deoxyribose 5'-phosphate)-2'-deoxyribonucleotide-DNA = a 3'-end 2'-deoxyribonucleotide-(2,3-dehydro-2,3-deoxyribose 5'-phosphate)-DNA + a 5'-end 5'-phospho-2'-deoxyribonucleoside-DNA + H(+). Functionally, involved in base excision repair of DNA damaged by oxidation or by mutagenic agents. Acts as a DNA glycosylase that recognizes and removes damaged bases. Has a preference for oxidized purines, such as 7,8-dihydro-8-oxoguanine (8-oxoG). Has AP (apurinic/apyrimidinic) lyase activity and introduces nicks in the DNA strand. Cleaves the DNA backbone by beta-delta elimination to generate a single-strand break at the site of the removed base with both 3'- and 5'-phosphates. The chain is Formamidopyrimidine-DNA glycosylase from Latilactobacillus sakei subsp. sakei (strain 23K) (Lactobacillus sakei subsp. sakei).